A 280-amino-acid chain; its full sequence is 4-diphosphocytidyl-2-C-methyl-D-erythritol kinase (280 aa).

The active site involves lysine 8. 91-101 (PIEAGLAGGSS) provides a ligand contact to ATP. Residue aspartate 133 is part of the active site.

This sequence belongs to the GHMP kinase family. IspE subfamily.

The enzyme catalyses 4-CDP-2-C-methyl-D-erythritol + ATP = 4-CDP-2-C-methyl-D-erythritol 2-phosphate + ADP + H(+). Its pathway is isoprenoid biosynthesis; isopentenyl diphosphate biosynthesis via DXP pathway; isopentenyl diphosphate from 1-deoxy-D-xylulose 5-phosphate: step 3/6. Its function is as follows. Catalyzes the phosphorylation of the position 2 hydroxy group of 4-diphosphocytidyl-2C-methyl-D-erythritol. This chain is 4-diphosphocytidyl-2-C-methyl-D-erythritol kinase, found in Clostridium tetani (strain Massachusetts / E88).